Here is a 205-residue protein sequence, read N- to C-terminus: MELPVNSFDKKEASTLTVADSAFGSEYKEGLVHQVVNAYLAGGRAGTKAQKTRREVSGSGAKPWRQKGTGRARAGSSRSPLWRSGGVAFAAKPRDFTQKVNRKMYRSAMASILSELIRREQLVVVDSLKLNEPKTRELKESLKKLNLGNVLIIIDGDDRNINLASRNMVGVSVCDALHVDPVSLVAAENIVVTVDAVKRLEERLS.

The tract at residues 44–79 (RAGTKAQKTRREVSGSGAKPWRQKGTGRARAGSSRS) is disordered.

It belongs to the universal ribosomal protein uL4 family. As to quaternary structure, part of the 50S ribosomal subunit.

Functionally, one of the primary rRNA binding proteins, this protein initially binds near the 5'-end of the 23S rRNA. It is important during the early stages of 50S assembly. It makes multiple contacts with different domains of the 23S rRNA in the assembled 50S subunit and ribosome. Forms part of the polypeptide exit tunnel. The chain is Large ribosomal subunit protein uL4 from Coxiella burnetii (strain Dugway 5J108-111).